Reading from the N-terminus, the 119-residue chain is UPF0102 protein FP2501 (119 aa).

This sequence belongs to the UPF0102 family.

This chain is UPF0102 protein FP2501, found in Flavobacterium psychrophilum (strain ATCC 49511 / DSM 21280 / CIP 103535 / JIP02/86).